We begin with the raw amino-acid sequence, 939 residues long: Intimin (939 aa).

Positions 1–41 are cleaved as a signal peptide; it reads MITHGFYARTRHKHKLKKTFIMLSAGLGLFFYVNQNSFANG. Residues 40–153 form a peptidoglycan-binding region; that stretch reads NGENYFKLGS…KLTKMSPDVT (114 aa). The tract at residues 40 to 153 is sufficient for homodimerization; it reads NGENYFKLGS…KLTKMSPDVT (114 aa). The interval 40-212 is required for periplasmic localization; that stretch reads NGENYFKLGS…LQAWLQHYGT (173 aa). The LysM domain occupies 63–112; it reads LFYTLKTGETVADLSKSQDINLSTIWSLNKHLYSSESEMMKAAPGQQIIL. Positions 189–430 are inverse autotransporter; it reads DTALGIAGNQ…PQYVNELRTL (242 aa). The segment at 402-411 is signature sequence for beta-barrel assembly machinery (BAM), which recognizes the unfolded beta-barrel in the periplasm; that stretch reads LYSMQFRYQF. 2 Big-1 domains span residues 560 to 653 and 660 to 751; these read VTDF…VIFV and ITEI…VEFF. The tract at residues 750 to 939 is required and sufficient for interaction with intimin receptor Tir; that stretch reads FFTTLTIDDG…ESNAYATCVK (190 aa). Residues 842-939 are C-type lectin domain; sequence LIVPNMSKRV…ESNAYATCVK (98 aa). The tract at residues 842 to 939 is intimin receptor Tir-binding; it reads LIVPNMSKRV…ESNAYATCVK (98 aa). Cysteines 860 and 937 form a disulfide.

The protein belongs to the intimin/invasin family. As to quaternary structure, homodimer. Interacts with Tir.

It localises to the cell outer membrane. An inverse autotransporter. Adhesin, which mediates attachment to the human intestine epithelial cells. Necessary for the production of attaching and effacing lesions on infected human tissue culture cells. Anchored to the outer membrane by binding to peptidoglycan (PGN) via its periplasmic domain, thus helping in receptor interactions during host invasion. PGN-binding may also aid in resisting mechanical and chemical stress during transit of the bacterium through the gastrointestinal tract of the host. Periplasmic domain binds purified E.coli PGN sacculi under acidic conditions in vitro and in vivo, but does not bind to chitin. Periplasmic domain binds PGN sacculi with an apparent dissociation constant (Kd) of 0.8 uM. No binding to PGN in vitro at normal physiological pH 7.4. This Escherichia coli O127:H6 (strain E2348/69 / EPEC) protein is Intimin.